Consider the following 102-residue polypeptide: Protein Tat (102 aa).

Positions 1-10 (MEPVDPRLEP) are enriched in basic and acidic residues. A disordered region spans residues 1–20 (MEPVDPRLEPWNHPGSQPKT). Positions 1 to 24 (MEPVDPRLEPWNHPGSQPKTACNK) are interaction with human CREBBP. Residues 1–48 (MEPVDPRLEPWNHPGSQPKTACNKCYCKKCCYHCMCCFTKKGLGISYG) are transactivation. The Zn(2+) site is built by C22, C25, and C27. The interval 22 to 37 (CNKCYCKKCCYHCMCC) is cysteine-rich. K28 carries the N6-acetyllysine; by host PCAF modification. C30, H33, C34, and C37 together coordinate Zn(2+). The interval 38-48 (FTKKGLGISYG) is core. A disordered region spans residues 47-102 (YGRKKRSQRRRPPKSSKDHQDPIPEQPLSRQQPGDQTGQKKQKKALEGKTEADPCD). A compositionally biased stretch (basic residues) spans 48–60 (GRKKRSQRRRPPK). A Nuclear localization signal, RNA-binding (TAR), and protein transduction motif is present at residues 49 to 57 (RKKRSQRRR). Residues 49-87 (RKKRSQRRRPPKSSKDHQDPIPEQPLSRQQPGDQTGQKK) are interaction with the host capping enzyme RNGTT. An N6-acetyllysine; by host EP300 and GCN5L2 mark is found at K50 and K51. Position 52 is an asymmetric dimethylarginine; by host PRMT6 (R52). A compositionally biased stretch (polar residues) spans 74 to 85 (LSRQQPGDQTGQ). Basic and acidic residues predominate over residues 90–102 (KALEGKTEADPCD).

Belongs to the lentiviruses Tat family. In terms of assembly, interacts with host CCNT1. Associates with the P-TEFb complex composed at least of Tat, P-TEFb (CDK9 and CCNT1), TAR RNA, RNA Pol II. Recruits the HATs CREBBP, TAF1/TFIID, EP300, PCAF and GCN5L2. Interacts with host KAT5/Tip60; this interaction targets the latter to degradation. Interacts with the host deacetylase SIRT1. Interacts with host capping enzyme RNGTT; this interaction stimulates RNGTT. Binds to host KDR, and to the host integrins ITGAV/ITGB3 and ITGA5/ITGB1. Interacts with host KPNB1/importin beta-1 without previous binding to KPNA1/importin alpha-1. Interacts with EIF2AK2. Interacts with host nucleosome assembly protein NAP1L1; this interaction may be required for the transport of Tat within the nucleus, since the two proteins interact at the nuclear rim. Interacts with host C1QBP/SF2P32; this interaction involves lysine-acetylated Tat. Interacts with the host chemokine receptors CCR2, CCR3 and CXCR4. Interacts with host DPP4/CD26; this interaction may trigger an anti-proliferative effect. Interacts with host LDLR. Interacts with the host extracellular matrix metalloproteinase MMP1. Interacts with host PRMT6; this interaction mediates Tat's methylation. Interacts with, and is ubiquitinated by MDM2/Hdm2. Interacts with host PSMC3 and HTATIP2. Interacts with STAB1; this interaction may overcome SATB1-mediated repression of IL2 and IL2RA (interleukin) in T cells by binding to the same domain than HDAC1. Interacts (when acetylated) with human CDK13, thereby increasing HIV-1 mRNA splicing and promoting the production of the doubly spliced HIV-1 protein Nef. Interacts with host TBP; this interaction modulates the activity of transcriptional pre-initiation complex. Interacts with host RELA. Interacts with host PLSCR1; this interaction negatively regulates Tat transactivation activity by altering its subcellular distribution. Asymmetrical arginine methylation by host PRMT6 seems to diminish the transactivation capacity of Tat and affects the interaction with host CCNT1. In terms of processing, acetylation by EP300, CREBBP, GCN5L2/GCN5 and PCAF regulates the transactivation activity of Tat. EP300-mediated acetylation of Lys-50 promotes dissociation of Tat from the TAR RNA through the competitive binding to PCAF's bromodomain. In addition, the non-acetylated Tat's N-terminus can also interact with PCAF. PCAF-mediated acetylation of Lys-28 enhances Tat's binding to CCNT1. Lys-50 is deacetylated by SIRT1. Post-translationally, polyubiquitination by host MDM2 does not target Tat to degradation, but activates its transactivation function and fosters interaction with CCNT1 and TAR RNA. Phosphorylated by EIF2AK2 on serine and threonine residues adjacent to the basic region important for TAR RNA binding and function. Phosphorylation of Tat by EIF2AK2 is dependent on the prior activation of EIF2AK2 by dsRNA.

It is found in the host nucleus. The protein resides in the host nucleolus. The protein localises to the host cytoplasm. Its subcellular location is the secreted. In terms of biological role, transcriptional activator that increases RNA Pol II processivity, thereby increasing the level of full-length viral transcripts. Recognizes a hairpin structure at the 5'-LTR of the nascent viral mRNAs referred to as the transactivation responsive RNA element (TAR) and recruits the cyclin T1-CDK9 complex (P-TEFb complex) that will in turn hyperphosphorylate the RNA polymerase II to allow efficient elongation. The CDK9 component of P-TEFb and other Tat-activated kinases hyperphosphorylate the C-terminus of RNA Pol II that becomes stabilized and much more processive. Other factors such as HTATSF1/Tat-SF1, SUPT5H/SPT5, and HTATIP2 are also important for Tat's function. Besides its effect on RNA Pol II processivity, Tat induces chromatin remodeling of proviral genes by recruiting the histone acetyltransferases (HATs) CREBBP, EP300 and PCAF to the chromatin. This also contributes to the increase in proviral transcription rate, especially when the provirus integrates in transcriptionally silent region of the host genome. To ensure maximal activation of the LTR, Tat mediates nuclear translocation of NF-kappa-B by interacting with host RELA. Through its interaction with host TBP, Tat may also modulate transcription initiation. Tat can reactivate a latently infected cell by penetrating in it and transactivating its LTR promoter. In the cytoplasm, Tat is thought to act as a translational activator of HIV-1 mRNAs. Functionally, extracellular circulating Tat can be endocytosed by surrounding uninfected cells via the binding to several surface receptors such as CD26, CXCR4, heparan sulfate proteoglycans (HSPG) or LDLR. Neurons are rarely infected, but they internalize Tat via their LDLR. Through its interaction with nuclear HATs, Tat is potentially able to control the acetylation-dependent cellular gene expression. Modulates the expression of many cellular genes involved in cell survival, proliferation or in coding for cytokines or cytokine receptors. Tat plays a role in T-cell and neurons apoptosis. Tat induced neurotoxicity and apoptosis probably contribute to neuroAIDS. Circulating Tat also acts as a chemokine-like and/or growth factor-like molecule that binds to specific receptors on the surface of the cells, affecting many cellular pathways. In the vascular system, Tat binds to ITGAV/ITGB3 and ITGA5/ITGB1 integrins dimers at the surface of endothelial cells and competes with bFGF for heparin-binding sites, leading to an excess of soluble bFGF. The polypeptide is Protein Tat (Human immunodeficiency virus type 1 group N (isolate YBF106) (HIV-1)).